The primary structure comprises 218 residues: Histone H1 (218 aa).

Low complexity predominate over residues 1 to 19; sequence MSETAPVAAPAVSAPGAKA. Disordered stretches follow at residues 1 to 42 and 89 to 218; these read MSET…PSVT and VSKG…TKKK. Residue Ser-2 is modified to N-acetylserine. One can recognise an H15 domain in the interval 37–110; that stretch reads AGPSVTELIT…GASGSFKLNK (74 aa). 4 stretches are compositionally biased toward basic residues: residues 118 to 133, 141 to 158, 166 to 184, and 191 to 218; these read KATKKKPAAKPKKPAA, KKPKKAAAVKKSPKKAKK, KAAKSPKKATKAGRPKKTA, and KAVKPKAAKSKAAKPKAAKAKKAATKKK.

Belongs to the histone H1/H5 family.

The protein resides in the nucleus. The protein localises to the chromosome. In terms of biological role, histones H1 are necessary for the condensation of nucleosome chains into higher-order structures. The protein is Histone H1 of Gallus gallus (Chicken).